The sequence spans 64 residues: Small ribosomal subunit protein bS21 (64 aa).

It belongs to the bacterial ribosomal protein bS21 family.

This is Small ribosomal subunit protein bS21 from Anaeromyxobacter dehalogenans (strain 2CP-1 / ATCC BAA-258).